A 794-amino-acid polypeptide reads, in one-letter code: DNA mismatch repair protein pms1 (794 aa).

Disordered regions lie at residues 351-384 and 409-442; these read SQIP…SFSY and GASL…TASS. Positions 352 to 371 are enriched in polar residues; that stretch reads QIPDSSGDSTDQELPQSIPA. Residues 419–429 are compositionally biased toward basic and acidic residues; the sequence is LPERLQKDSMR. Polar residues predominate over residues 430 to 442; that stretch reads RSSPLNEKVTASS.

This sequence belongs to the DNA mismatch repair MutL/HexB family.

Its function is as follows. This protein is involved in the repair of mismatches in DNA. The sequence is that of DNA mismatch repair protein pms1 (pms1) from Schizosaccharomyces pombe (strain 972 / ATCC 24843) (Fission yeast).